Here is a 62-residue protein sequence, read N- to C-terminus: Photosystem II reaction center protein Z (62 aa).

The next 2 membrane-spanning stretches (helical) occupy residues 8-28 (LVSILILLSFALVVGVPVILV) and 41-61 (YASAGLWFGLVIVTAAFNSFV).

The protein belongs to the PsbZ family. In terms of assembly, PSII is composed of 1 copy each of membrane proteins PsbA, PsbB, PsbC, PsbD, PsbE, PsbF, PsbH, PsbI, PsbJ, PsbK, PsbL, PsbM, PsbT, PsbX, PsbY, PsbZ, Psb30/Ycf12, at least 3 peripheral proteins of the oxygen-evolving complex and a large number of cofactors. It forms dimeric complexes.

The protein localises to the plastid. It is found in the chloroplast thylakoid membrane. Its function is as follows. May control the interaction of photosystem II (PSII) cores with the light-harvesting antenna, regulates electron flow through the 2 photosystem reaction centers. PSII is a light-driven water plastoquinone oxidoreductase, using light energy to abstract electrons from H(2)O, generating a proton gradient subsequently used for ATP formation. This chain is Photosystem II reaction center protein Z, found in Guillardia theta (Cryptophyte).